A 300-amino-acid chain; its full sequence is Bis(5'-nucleosyl)-tetraphosphatase, symmetrical (300 aa).

This sequence belongs to the Ap4A hydrolase family.

The catalysed reaction is P(1),P(4)-bis(5'-adenosyl) tetraphosphate + H2O = 2 ADP + 2 H(+). In terms of biological role, hydrolyzes diadenosine 5',5'''-P1,P4-tetraphosphate to yield ADP. The polypeptide is Bis(5'-nucleosyl)-tetraphosphatase, symmetrical (Pseudomonas syringae pv. tomato (strain ATCC BAA-871 / DC3000)).